A 232-amino-acid chain; its full sequence is RNA chaperone ProQ (232 aa).

Positions 105-182 are disordered; that stretch reads EAKARVQAQR…REEQHTPVSD (78 aa). The span at 117–136 shows a compositional bias: basic and acidic residues; that stretch reads QQAKKREAAAAAGEKEDAPR. Positions 137–146 are enriched in basic residues; that stretch reads RERKPRPTTP. The span at 147–177 shows a compositional bias: basic and acidic residues; sequence RRKEGAERKPRSQKPVEKAPKTVKAPREEQH.

The protein belongs to the ProQ family.

The protein resides in the cytoplasm. Functionally, RNA chaperone with significant RNA binding, RNA strand exchange and RNA duplexing activities. May regulate ProP activity through an RNA-based, post-transcriptional mechanism. The chain is RNA chaperone ProQ from Escherichia coli (strain UTI89 / UPEC).